The chain runs to 123 residues: Large ribosomal subunit protein uL29 (123 aa).

Belongs to the universal ribosomal protein uL29 family. Component of the large ribosomal subunit.

It is found in the cytoplasm. Its function is as follows. Component of the large ribosomal subunit. The ribosome is a large ribonucleoprotein complex responsible for the synthesis of proteins in the cell. In Platichthys flesus (European flounder), this protein is Large ribosomal subunit protein uL29 (rpl35).